Here is a 455-residue protein sequence, read N- to C-terminus: Chromosomal replication initiator protein DnaA (455 aa).

A domain I, interacts with DnaA modulators region spans residues 1–70; it reads MTNETWVQVR…RMRLTEAGSP (70 aa). The interval 70–113 is domain II; sequence PVERLEFAVSNTPRAPLKEVKAAAPAASPARARPAPPEEDLRGA. Positions 87–109 are disordered; sequence KEVKAAAPAASPARARPAPPEED. Low complexity predominate over residues 91-102; sequence AAAPAASPARAR. Residues 114 to 335 form a domain III, AAA+ region region; that stretch reads PLDARFTFDS…GALTRLFAFA (222 aa). Residues glycine 158, glycine 160, lysine 161, and threonine 162 each coordinate ATP. A domain IV, binds dsDNA region spans residues 336 to 455; it reads SLVGREITLD…LQLLRRLLQA (120 aa).

The protein belongs to the DnaA family. In terms of assembly, oligomerizes as a right-handed, spiral filament on DNA at oriC.

The protein localises to the cytoplasm. Plays an essential role in the initiation and regulation of chromosomal replication. ATP-DnaA binds to the origin of replication (oriC) to initiate formation of the DNA replication initiation complex once per cell cycle. Binds the DnaA box (a 9 base pair repeat at the origin) and separates the double-stranded (ds)DNA. Forms a right-handed helical filament on oriC DNA; dsDNA binds to the exterior of the filament while single-stranded (ss)DNA is stabiized in the filament's interior. The ATP-DnaA-oriC complex binds and stabilizes one strand of the AT-rich DNA unwinding element (DUE), permitting loading of DNA polymerase. After initiation quickly degrades to an ADP-DnaA complex that is not apt for DNA replication. Binds acidic phospholipids. This chain is Chromosomal replication initiator protein DnaA, found in Cereibacter sphaeroides (strain ATCC 17029 / ATH 2.4.9) (Rhodobacter sphaeroides).